We begin with the raw amino-acid sequence, 279 residues long: Movement protein (279 aa).

The tract at residues 246-279 is disordered; it reads SESEELNVESPPAAIGSSSASRSEAFRPQVVNGL. A compositionally biased stretch (low complexity) spans 254 to 268; that stretch reads ESPPAAIGSSSASRS.

Belongs to the cucumovirus movement protein family.

The protein resides in the host cell junction. Its subcellular location is the host plasmodesma. Functionally, transports viral genome to neighboring plant cells directly through plasmosdesmata, without any budding. The movement protein allows efficient cell to cell propagation, by bypassing the host cell wall barrier. Acts by forming a tubular structure at the host plasmodesmata, enlarging it enough to allow free passage of virion capsids. The chain is Movement protein from Cucumber mosaic virus (strain O) (CMV).